The sequence spans 228 residues: Tungstate uptake system permease protein TupB (228 aa).

5 helical membrane passes run 25–45 (IIFLSVFVSSTATAIAAAVSI), 65–85 (VLYSLMSVPSVIVGLVVAIGL), 102–122 (AMIIAQALLVFPLCLGLTYSL), 144–164 (VIILIIRELKAELFINVVTTF), and 203–223 (MAIALGLVLLMISFAINAVIY). Positions 26–222 (IFLSVFVSST…MISFAINAVI (197 aa)) constitute an ABC transmembrane type-1 domain.

It belongs to the binding-protein-dependent transport system permease family. In terms of assembly, the complex is composed of two ATP-binding proteins (TupC), two transmembrane proteins (TupB) and a solute-binding protein (TupA).

The protein resides in the cell membrane. Functionally, part of an ABC transporter complex involved in tungstate uptake. Probably responsible for the translocation of the substrate across the membrane. The chain is Tungstate uptake system permease protein TupB from Peptoclostridium acidaminophilum (Eubacterium acidaminophilum).